Here is a 389-residue protein sequence, read N- to C-terminus: Probable zinc transporter zip2 (389 aa).

The next 7 membrane-spanning stretches (helical) occupy residues 6–26 (GWIL…GIYL), 48–68 (LVTG…ASVM), 88–108 (VFQF…NHFL), 267–289 (VLVA…LYLA), 305–325 (SCSL…GGIG), 329–349 (FLNF…LILS), and 368–388 (HSFI…IFDS).

The protein belongs to the ZIP transporter (TC 2.A.5) family.

It is found in the endoplasmic reticulum membrane. Probable zinc transporter that may mediate zinc remobilization from the endoplasmic reticulum under zinc limitation. The polypeptide is Probable zinc transporter zip2 (zip2) (Schizosaccharomyces pombe (strain 972 / ATCC 24843) (Fission yeast)).